Reading from the N-terminus, the 263-residue chain is Oxidoreductase tpcG (263 aa).

Belongs to the avfA family. As to expression, specifically expressed in conidia.

It participates in secondary metabolite biosynthesis. Functionally, oxidoreductase; part of the gene cluster that mediates the biosynthesis of trypacidin, a mycotoxin with antiprotozoal activity and that plays a role in the infection process. The pathway begins with the synthesis of atrochrysone thioester by the polyketide synthase (PKS) tpcC. The atrochrysone carboxyl ACP thioesterase tpcB then breaks the thioester bond and releases the atrochrysone carboxylic acid from tpcC. The decarboxylase tpcK converts atrochrysone carboxylic acid to atrochrysone which is further reduced into emodin anthrone. The next step is performed by the emodin anthrone oxygenase tpcL that catalyzes the oxidation of emodinanthrone to emodin. Emodin O-methyltransferase encoded by tpcA catalyzes methylation of the 8-hydroxy group of emodin to form questin. Ring cleavage of questin by questin oxidase tpcI leads to desmethylsulochrin via several intermediates including questin epoxide. Another methylation step catalyzed by tpcM leads to the formation of sulochrin which is further converted to monomethylsulfochrin by tpcH. Finally, the tpcJ catalyzes the conversion of monomethylsulfochrin to trypacidin. Trypacidin is toxic for human pulmonary and bronchial epithelial cells by initiating the intracellular formation of nitric oxide (NO) and hydrogen peroxide (H(2)O(2)), thus triggering host necrotic cell death. The trypacidin pathway is also able to produce endocrocin via a distinct route from the endocrocin Enc pathway. The protein is Oxidoreductase tpcG of Aspergillus fumigatus (strain ATCC MYA-4609 / CBS 101355 / FGSC A1100 / Af293) (Neosartorya fumigata).